The primary structure comprises 298 residues: Aspartate carbamoyltransferase catalytic subunit (298 aa).

Carbamoyl phosphate is bound by residues Arg-50 and Thr-51. An L-aspartate-binding site is contributed by Lys-79. Positions 100, 128, and 131 each coordinate carbamoyl phosphate. L-aspartate-binding residues include Arg-160 and Arg-221. Leu-260 and Pro-261 together coordinate carbamoyl phosphate.

Belongs to the aspartate/ornithine carbamoyltransferase superfamily. ATCase family. In terms of assembly, heterooligomer of catalytic and regulatory chains.

The enzyme catalyses carbamoyl phosphate + L-aspartate = N-carbamoyl-L-aspartate + phosphate + H(+). Its pathway is pyrimidine metabolism; UMP biosynthesis via de novo pathway; (S)-dihydroorotate from bicarbonate: step 2/3. Catalyzes the condensation of carbamoyl phosphate and aspartate to form carbamoyl aspartate and inorganic phosphate, the committed step in the de novo pyrimidine nucleotide biosynthesis pathway. The chain is Aspartate carbamoyltransferase catalytic subunit from Methanosphaerula palustris (strain ATCC BAA-1556 / DSM 19958 / E1-9c).